The chain runs to 1083 residues: Solute carrier family 12 member 7 (1083 aa).

The disordered stretch occupies residues 1-52 (MPTNFTVVPVEAHADGGGDETAERTEAPGTPEGPEPERPSPGDGNPRENSPF). The Cytoplasmic segment spans residues 1–119 (MPTNFTVVPV…RREAKAPRMG (119 aa)). Over residues 12-26 (AHADGGGDETAERTE) the composition is skewed to basic and acidic residues. T30 is modified (phosphothreonine). S50 and S62 each carry phosphoserine. The chain crosses the membrane as a discontinuously helical span at residues 120–142 (TFIGVYLPCLQNILGVILFLRLT). K(+) contacts are provided by N131 and I132. V135 serves as a coordination point for chloride. Topologically, residues 143–149 (WIVGVAG) are extracellular. The helical transmembrane segment at 150-172 (VLESFLIVAMCCTCTMLTAISMS) threads the bilayer. Residues 173–196 (AIATNGVVPAGGSYYMISRSLGPE) are Cytoplasmic-facing. Residues 197-225 (FGGAVGLCFYLGTTFAGAMYILGTIEIFL) traverse the membrane as a helical segment. Topologically, residues 226–249 (TYISPGAAIFQAEAAGGEAAAMLH) are extracellular. A run of 2 helical transmembrane segments spans residues 250–270 (NMRV…FVGV) and 272–300 (YVNK…KSAF). The Extracellular portion of the chain corresponds to 301 to 419 (DPPDIPVCLL…PYVLTDIAAS (119 aa)). Cystine bridges form between C308-C323 and C343-C352. N312 carries N-linked (GlcNAc...) asparagine glycosylation. N360 is a glycosylation site (N-linked (GlcNAc...) asparagine). A helical transmembrane segment spans residues 420 to 440 (FTLLVGIYFPSVTGIMAGSNR). Residues P429 and T432 each coordinate K(+). P429 lines the chloride pocket. Chloride-binding residues include G433 and I434. Over 441 to 450 (SGDLKDAQKS) the chain is Cytoplasmic. The helical transmembrane segment at 451–473 (IPTGTILAIVTTSFIYLSCIVLF) threads the bilayer. At 474–504 (GACIEGVVLRDKFGEALQGNLVIGMLAWPSP) the chain is on the extracellular side. The chain crosses the membrane as a helical span at residues 505 to 531 (WVIVIGSFFSTCGAGLQSLTGAPRLLQ). Topologically, residues 532–554 (AIARDGIVPFLQVFGHGKANGEP) are cytoplasmic. 2 helical membrane-spanning segments follow: residues 555-571 (TWAL…GILI) and 574-598 (LDSV…ACAV). Position 589 (Y589) interacts with chloride. Residues 599 to 612 (QTLLRTPNWRPRFK) lie on the Cytoplasmic side of the membrane. Transmembrane regions (helical) follow at residues 613-632 (FYHW…LMFI) and 636-651 (YYAL…IYKY). Topologically, residues 652 to 1083 (IEYRGAEKEW…GGREVITIYS (432 aa)) are cytoplasmic. The tract at residues 664 to 680 (GIRGLSLNAARYALLRV) is scissor helix. T973 and T980 each carry phosphothreonine.

Belongs to the SLC12A transporter family. K/Cl co-transporter subfamily. As to quaternary structure, homodimer; adopts a domain-swap conformation at the scissor helices connecting the transmembrane domain and C-terminal domain. Heterodimer with K-Cl cotransporter SLC12A5. As to expression, detected in muscle, brain, lung, heart and kidney.

It is found in the cell membrane. The enzyme catalyses K(+)(in) + chloride(in) = K(+)(out) + chloride(out). Its activity is regulated as follows. Activated by N-ethylmaleimide (NEM). Inhibited by furosemide, DIDS and bumetanide. The inhibition is much stronger in the presence of 50 mM K(+) in the uptake medium. Inhibited by DIOA. Inhibited by WNK3. Mediates electroneutral potassium-chloride cotransport when activated by cell swelling. May mediate K(+) uptake into Deiters' cells in the cochlea and contribute to K(+) recycling in the inner ear. Important for the survival of cochlear outer and inner hair cells and the maintenance of the organ of Corti. May be required for basolateral Cl(-) extrusion in the kidney and contribute to renal acidification. This chain is Solute carrier family 12 member 7, found in Homo sapiens (Human).